The chain runs to 271 residues: Putative phosphoenolpyruvate synthase regulatory protein (271 aa).

151 to 158 (GVSRSGKT) lines the ADP pocket.

The protein belongs to the pyruvate, phosphate/water dikinase regulatory protein family. PSRP subfamily.

The enzyme catalyses [pyruvate, water dikinase] + ADP = [pyruvate, water dikinase]-phosphate + AMP + H(+). It carries out the reaction [pyruvate, water dikinase]-phosphate + phosphate + H(+) = [pyruvate, water dikinase] + diphosphate. Its function is as follows. Bifunctional serine/threonine kinase and phosphorylase involved in the regulation of the phosphoenolpyruvate synthase (PEPS) by catalyzing its phosphorylation/dephosphorylation. The sequence is that of Putative phosphoenolpyruvate synthase regulatory protein from Burkholderia mallei (strain NCTC 10247).